The sequence spans 403 residues: Phosphopentomutase (403 aa).

Mn(2+)-binding residues include Asp13, Asp298, His303, Asp339, His340, and His351.

The protein belongs to the phosphopentomutase family. Requires Mn(2+) as cofactor.

It localises to the cytoplasm. It catalyses the reaction 2-deoxy-alpha-D-ribose 1-phosphate = 2-deoxy-D-ribose 5-phosphate. It carries out the reaction alpha-D-ribose 1-phosphate = D-ribose 5-phosphate. The protein operates within carbohydrate degradation; 2-deoxy-D-ribose 1-phosphate degradation; D-glyceraldehyde 3-phosphate and acetaldehyde from 2-deoxy-alpha-D-ribose 1-phosphate: step 1/2. Isomerase that catalyzes the conversion of deoxy-ribose 1-phosphate (dRib-1-P) and ribose 1-phosphate (Rib-1-P) to deoxy-ribose 5-phosphate (dRib-5-P) and ribose 5-phosphate (Rib-5-P), respectively. This is Phosphopentomutase from Streptococcus suis (strain 05ZYH33).